The following is a 39-amino-acid chain: Potassium channel toxin alpha-KTx 2.8 (39 aa).

Cystine bridges form between cysteine 7–cysteine 29, cysteine 13–cysteine 34, and cysteine 17–cysteine 36.

Belongs to the short scorpion toxin superfamily. Potassium channel inhibitor family. Alpha-KTx 02 subfamily. In terms of tissue distribution, expressed by the venom gland.

Its subcellular location is the secreted. Functionally, blocks Kv1.3/KCNA3 voltage-gated potassium channels of human T-lymphocytes (Kd=0.71 nM). In Centruroides elegans (Bark scorpion), this protein is Potassium channel toxin alpha-KTx 2.8.